Consider the following 930-residue polypeptide: Protein ARABIDILLO 1 (930 aa).

The Nuclear localization signal motif lies at 3–8 (RRVRRK). The F-box domain maps to 44–90 (FVDWISLPYDTVLQLFTCLNYRDRASLASTCKTWRCLGASSCLWTSL). ARM repeat units lie at residues 172–212 (RITS…KHCP), 244–285 (TSNI…TSSQ), 379–418 (PEGL…TFVV), 428–467 (CGRA…NLSV), 469–508 (ANIA…NLSV), 510–552 (EEHK…NLAA), 554–594 (DKCS…NLAA), 600–639 (NNNA…NLSF), 641–683 (DKNR…GLSV), 685–724 (EANS…NLAF), 726–766 (PGNA…YMFD), 790–831 (LDGA…QVTE), and 835–875 (IQEA…QFTI).

It belongs to the beta-catenin family. In terms of assembly, interacts with SNL1. Interacts with MYB53, MYB92 and MYB93. As to expression, expressed ubiquitously, with higher levels in root tip, pericycle and vasculature.

The protein resides in the nucleus. Functionally, promotes lateral root initiation and development, independently of auxin (IAA) and abscisis acid (ABA). The protein is Protein ARABIDILLO 1 (FBX5) of Arabidopsis thaliana (Mouse-ear cress).